Here is a 357-residue protein sequence, read N- to C-terminus: GDSL esterase/lipase At5g45950 (357 aa).

Residues 1 to 23 (MLLVAFVTLLVAVALQPLPSVLS) form the signal peptide. Asn37 is a glycosylation site (N-linked (GlcNAc...) asparagine). Ser47 serves as the catalytic Nucleophile. Asn132 is a glycosylation site (N-linked (GlcNAc...) asparagine). Active-site residues include Asp331 and His334.

Belongs to the 'GDSL' lipolytic enzyme family.

The protein resides in the secreted. This chain is GDSL esterase/lipase At5g45950, found in Arabidopsis thaliana (Mouse-ear cress).